The primary structure comprises 315 residues: Thymidylate synthase (315 aa).

DUMP-binding positions include Arg-29 and 156–157 (RR). Cys-176 serves as the catalytic Nucleophile. Residues 213-216 (RSCD), Asn-224, and 254-256 (HVY) contribute to the dUMP site. Position 216 (Asp-216) interacts with (6R)-5,10-methylene-5,6,7,8-tetrahydrofolate.

This sequence belongs to the thymidylate synthase family. Homodimer.

The enzyme catalyses dUMP + (6R)-5,10-methylene-5,6,7,8-tetrahydrofolate = 7,8-dihydrofolate + dTMP. It participates in pyrimidine metabolism; dTTP biosynthesis. The sequence is that of Thymidylate synthase (TMP1) from Candida albicans (strain SC5314 / ATCC MYA-2876) (Yeast).